The chain runs to 919 residues: MKKLKKPIIITALAIFTIYLFSLFVDYYGDWLWFKNMGYDSVFDTILLTKILSFILFFLIFILFSGIHIHFAYHGGSQSRNNIPLADDDPRQKILPLYQGKAVAWLWAVIILFFAIVMGSYASAYWHDFLKFIYPSSFDLKEPIFGKDAGFYIFTLPVYQFVVSWYLFMVVITFIGVLSSYYIDTAFNFTSRKFNITGKAKSHLTQLTAFFALGVSALYFIKLYNILYSSHGVAYGPSYMDVHAQIPAYWTILVMSLIITILLFFYPFYKKRKVIVSALGLWVLVWAGFVWIYPGIVEQYIVKPNELKKETPYILNNIKFTRTAFGLDNIKVKPFSVDQNITYKDILDNRHTIENIRLWDRRPLIQTYKQLQEIRLYYDFKNVQVDRYHFHKYTEVVLGARELPELGIPARAQTWVNNHLIYTHGYGVVMNPVNEITSDGMPELIVKDIPPTTSVNLNIKQMAIYYGEETNQFVLVNTRAKEFDYPKGDDNVYASYAGKGGVQISSLFRRLVYAWKFSDINILFTGYLTKQSRIMFHRNIMQRVATLAPFLSFDSQPYPVVGKDGKLYWIQDAYTTSNMFPYSEPLYHNPIERGINYINNSVKIVIDAYDGDVSFYVINPKDPLVQTYEKIYPKLFKPFSNMPGFLKAHIRYPTDLFNIQTKMYNVYHMTDPKVFYNQEDYWEIPNETYSRGEQKMFPYYIIMRLPDTKNEEFILMIPITPSKKDNMNAWLCARCDAPNYGELIVYTLPKDKLIYGPMQIQARINQQPDISSELTLWGQQGSRVIKGNQLVIPIKNSFIYVEPVYLQSEEGQIPELKRVIVAFKEKVEMRKTLDEALEAVFNVAPGQMANPQQSAGKHVGGRTVLSIEAHKALEHYNKAMDSLRQNDWANFGKELDEMKSVLLKMTQSETKSSGMPKVK.

7 helical membrane-spanning segments follow: residues 8 to 28, 51 to 71, 102 to 122, 158 to 178, 207 to 227, 246 to 266, and 274 to 294; these read IIITALAIFTIYLFSLFVDYY, ILSFILFFLIFILFSGIHIHF, AVAWLWAVIILFFAIVMGSYA, VYQFVVSWYLFMVVITFIGVL, LTAFFALGVSALYFIKLYNIL, IPAYWTILVMSLIITILLFFY, and VIVSALGLWVLVWAGFVWIYP.

This sequence belongs to the UPF0182 family.

The protein resides in the cell membrane. In Sulfurovum sp. (strain NBC37-1), this protein is UPF0182 protein SUN_1015.